The primary structure comprises 321 residues: Torsin-2A (321 aa).

The N-terminal stretch at 1–26 (MAVARHGYRPWGSILGLLGLALAAAA) is a signal peptide. 93–100 (GWTGTGKS) contributes to the ATP binding site. The N-linked (GlcNAc...) asparagine glycan is linked to N149.

It belongs to the ClpA/ClpB family. Torsin subfamily. In terms of assembly, homohexamer. Interacts with TOR1AIP1. N-glycosylated. Expressed at similar levels in liver, muscle and brain (at protein level).

The protein resides in the endoplasmic reticulum lumen. This is Torsin-2A (Tor2a) from Mus musculus (Mouse).